The primary structure comprises 98 residues: Large ribosomal subunit protein uL23 (98 aa).

It belongs to the universal ribosomal protein uL23 family. In terms of assembly, part of the 50S ribosomal subunit. Contacts protein L29, and trigger factor when it is bound to the ribosome.

Its function is as follows. One of the early assembly proteins it binds 23S rRNA. One of the proteins that surrounds the polypeptide exit tunnel on the outside of the ribosome. Forms the main docking site for trigger factor binding to the ribosome. The protein is Large ribosomal subunit protein uL23 of Hydrogenovibrio crunogenus (strain DSM 25203 / XCL-2) (Thiomicrospira crunogena).